The sequence spans 265 residues: Undecaprenyl-diphosphatase (265 aa).

Helical transmembrane passes span 38–58 (SDMF…IIYW), 80–100 (LIVA…LGFE), 107–127 (PIAW…WAAA), 135–155 (ITWL…VFPG), 175–195 (AAAT…ASGY), 213–233 (ALAI…KWLL), and 244–264 (FAIY…TGMI).

The protein belongs to the UppP family.

The protein resides in the cell inner membrane. The enzyme catalyses di-trans,octa-cis-undecaprenyl diphosphate + H2O = di-trans,octa-cis-undecaprenyl phosphate + phosphate + H(+). In terms of biological role, catalyzes the dephosphorylation of undecaprenyl diphosphate (UPP). Confers resistance to bacitracin. The protein is Undecaprenyl-diphosphatase of Rhizobium etli (strain ATCC 51251 / DSM 11541 / JCM 21823 / NBRC 15573 / CFN 42).